We begin with the raw amino-acid sequence, 282 residues long: Biotin synthase (282 aa).

One can recognise a Radical SAM core domain in the interval 1 to 228; it reads MQEIFLCSIS…NARLMVAGGR (228 aa). [4Fe-4S] cluster contacts are provided by Cys-17, Cys-21, and Cys-24. Residues Cys-61, Cys-96, Cys-154, and Arg-221 each contribute to the [2Fe-2S] cluster site.

This sequence belongs to the radical SAM superfamily. Biotin synthase family. In terms of assembly, homodimer. Requires [4Fe-4S] cluster as cofactor. The cofactor is [2Fe-2S] cluster.

It catalyses the reaction (4R,5S)-dethiobiotin + (sulfur carrier)-SH + 2 reduced [2Fe-2S]-[ferredoxin] + 2 S-adenosyl-L-methionine = (sulfur carrier)-H + biotin + 2 5'-deoxyadenosine + 2 L-methionine + 2 oxidized [2Fe-2S]-[ferredoxin]. It participates in cofactor biosynthesis; biotin biosynthesis; biotin from 7,8-diaminononanoate: step 2/2. In terms of biological role, catalyzes the conversion of dethiobiotin (DTB) to biotin by the insertion of a sulfur atom into dethiobiotin via a radical-based mechanism. This is Biotin synthase from Helicobacter pylori (strain G27).